A 593-amino-acid polypeptide reads, in one-letter code: Proteasome-associated ATPase (593 aa).

Residues 23-95 are a coiled coil; the sequence is LLSQISYLEE…LKEEVDRLGQ (73 aa). Position 282 to 287 (282 to 287) interacts with ATP; that stretch reads GCGKTL. Positions 592–593 are docks into pockets in the proteasome alpha-ring; it reads YL.

This sequence belongs to the AAA ATPase family. Homohexamer. Assembles into a hexameric ring structure that caps the 20S proteasome core. Strongly interacts with the prokaryotic ubiquitin-like protein Pup through a hydrophobic interface; the interacting region of ARC lies in its N-terminal coiled-coil domain. There is one Pup binding site per ARC hexamer ring. Upon ATP-binding, the C-terminus of ARC interacts with the alpha-rings of the proteasome core, possibly by binding to the intersubunit pockets.

It participates in protein degradation; proteasomal Pup-dependent pathway. Functionally, ATPase which is responsible for recognizing, binding, unfolding and translocation of pupylated proteins into the bacterial 20S proteasome core particle. May be essential for opening the gate of the 20S proteasome via an interaction with its C-terminus, thereby allowing substrate entry and access to the site of proteolysis. Thus, the C-termini of the proteasomal ATPase may function like a 'key in a lock' to induce gate opening and therefore regulate proteolysis. The chain is Proteasome-associated ATPase from Geodermatophilus obscurus (strain ATCC 25078 / DSM 43160 / JCM 3152 / CCUG 61914 / KCC A-0152 / KCTC 9177 / NBRC 13315 / NRRL B-3577 / G-20).